We begin with the raw amino-acid sequence, 286 residues long: 2-hydroxy-6-oxo-6-phenylhexa-2,4-dienoate hydrolase (286 aa).

Residues 42–43 (GG), Asn-51, Lys-111, Ser-180, and Arg-190 contribute to the substrate site. In terms of domain architecture, AB hydrolase-1 spans 173–271 (NVFLFDQSLI…RCVHWAQWEH (99 aa)). Residue His-265 is the Proton acceptor of the active site. A substrate-binding site is contributed by Trp-266.

This sequence belongs to the AB hydrolase superfamily. BphD family. Homodimer.

It carries out the reaction 2,6-dioxo-6-phenylhexa-3-enoate + H2O = 2-oxopent-4-enoate + benzoate + H(+). The protein operates within xenobiotic degradation; biphenyl degradation; 2-hydroxy-2,4-pentadienoate and benzoate from biphenyl: step 4/4. Functionally, catalyzes an unusual C-C bond hydrolysis of 2-hydroxy-6-oxo-6-phenylhexa-2,4-dienoic acid (HOPDA) to produce benzoic acid and 2-hydroxy-2,4-pentadienoic acid (HPD). The polypeptide is 2-hydroxy-6-oxo-6-phenylhexa-2,4-dienoate hydrolase (Delftia acidovorans (Pseudomonas acidovorans)).